The following is a 203-amino-acid chain: Octanoyltransferase (203 aa).

The region spanning 32 to 203 is the BPL/LPL catalytic domain; sequence ISTPDEIWLV…LMHKIREIFS (172 aa). Residues 71 to 78, 138 to 140, and 151 to 153 each bind substrate; these read RGGKITYH, SLG, and GMA. Residue C169 is the Acyl-thioester intermediate of the active site.

The protein belongs to the LipB family.

Its subcellular location is the cytoplasm. It catalyses the reaction octanoyl-[ACP] + L-lysyl-[protein] = N(6)-octanoyl-L-lysyl-[protein] + holo-[ACP] + H(+). It participates in protein modification; protein lipoylation via endogenous pathway; protein N(6)-(lipoyl)lysine from octanoyl-[acyl-carrier-protein]: step 1/2. Catalyzes the transfer of endogenously produced octanoic acid from octanoyl-acyl-carrier-protein onto the lipoyl domains of lipoate-dependent enzymes. Lipoyl-ACP can also act as a substrate although octanoyl-ACP is likely to be the physiological substrate. This chain is Octanoyltransferase, found in Buchnera aphidicola subsp. Baizongia pistaciae (strain Bp).